An 89-amino-acid chain; its full sequence is MAVTTDQKSQVILDYQRVAGDTGSPEVQVAILTTRINSLIDHFKEHVKDHHSRRGLLRMVSRRRKLLDYLKSRNSDNYRILIERLGLRK.

Belongs to the universal ribosomal protein uS15 family. Part of the 30S ribosomal subunit. Forms a bridge to the 50S subunit in the 70S ribosome, contacting the 23S rRNA.

Its function is as follows. One of the primary rRNA binding proteins, it binds directly to 16S rRNA where it helps nucleate assembly of the platform of the 30S subunit by binding and bridging several RNA helices of the 16S rRNA. Forms an intersubunit bridge (bridge B4) with the 23S rRNA of the 50S subunit in the ribosome. In Nitrosomonas eutropha (strain DSM 101675 / C91 / Nm57), this protein is Small ribosomal subunit protein uS15.